Here is a 135-residue protein sequence, read N- to C-terminus: Large ribosomal subunit protein uL16c (135 aa).

Belongs to the universal ribosomal protein uL16 family. Part of the 50S ribosomal subunit.

The protein resides in the plastid. It is found in the chloroplast. The protein is Large ribosomal subunit protein uL16c of Gossypium barbadense (Sea Island cotton).